An 86-amino-acid chain; its full sequence is Parvalbumin beta 3 (86 aa).

Ala1 carries the post-translational modification N-acetylalanine. The EF-hand domain occupies Leu35–Gly70. Ca(2+) contacts are provided by Asp48, Asp50, Ser52, Phe54, Glu56, and Glu59.

It belongs to the parvalbumin family.

In muscle, parvalbumin is thought to be involved in relaxation after contraction. It binds two calcium ions. This Merluccius hubbsi (Argentine hake) protein is Parvalbumin beta 3.